The chain runs to 337 residues: Annexin E1 (337 aa).

Annexin repeat units lie at residues 10-80 (TGVT…MLYK), 81-154 (PRAQ…AVAT), 161-238 (DTHE…LAHD), and 242-312 (DPCC…LLWE).

This sequence belongs to the annexin family.

It localises to the cell projection. Its subcellular location is the cilium. The protein resides in the flagellum. Its function is as follows. May function as a calcium-regulated structural element linking phospholipid bilayer and underlying axoneme. This chain is Annexin E1 (ANXE1), found in Giardia intestinalis (Giardia lamblia).